The primary structure comprises 417 residues: Gamma-glutamyl phosphate reductase (417 aa).

The protein belongs to the gamma-glutamyl phosphate reductase family.

Its subcellular location is the cytoplasm. It catalyses the reaction L-glutamate 5-semialdehyde + phosphate + NADP(+) = L-glutamyl 5-phosphate + NADPH + H(+). Its pathway is amino-acid biosynthesis; L-proline biosynthesis; L-glutamate 5-semialdehyde from L-glutamate: step 2/2. Functionally, catalyzes the NADPH-dependent reduction of L-glutamate 5-phosphate into L-glutamate 5-semialdehyde and phosphate. The product spontaneously undergoes cyclization to form 1-pyrroline-5-carboxylate. The polypeptide is Gamma-glutamyl phosphate reductase (Legionella pneumophila (strain Paris)).